Consider the following 1322-residue polypeptide: Phosphoribosylformylglycinamidine synthase (1322 aa).

ATP-binding positions include 307–318 (GASTGSGGEIRD) and A678. The Mg(2+) site is built by E718, N722, and D886. A Glutamine amidotransferase type-1 domain is found at 1069–1322 (MAILREQGVN…MFRNARVNLG (254 aa)). C1162 (nucleophile) is an active-site residue. Catalysis depends on residues H1287 and E1289.

It in the N-terminal section; belongs to the FGAMS family. As to quaternary structure, monomer.

The protein localises to the cytoplasm. It carries out the reaction N(2)-formyl-N(1)-(5-phospho-beta-D-ribosyl)glycinamide + L-glutamine + ATP + H2O = 2-formamido-N(1)-(5-O-phospho-beta-D-ribosyl)acetamidine + L-glutamate + ADP + phosphate + H(+). It participates in purine metabolism; IMP biosynthesis via de novo pathway; 5-amino-1-(5-phospho-D-ribosyl)imidazole from N(2)-formyl-N(1)-(5-phospho-D-ribosyl)glycinamide: step 1/2. Functionally, phosphoribosylformylglycinamidine synthase involved in the purines biosynthetic pathway. Catalyzes the ATP-dependent conversion of formylglycinamide ribonucleotide (FGAR) and glutamine to yield formylglycinamidine ribonucleotide (FGAM) and glutamate. This Photobacterium profundum (strain SS9) protein is Phosphoribosylformylglycinamidine synthase.